We begin with the raw amino-acid sequence, 339 residues long: MEITLFDPIDAHLHVRENALLKAVLEYSSEPFSAAVIMPNLSKPLIDTPITLEYEEEILKNSSNFKPLMSLYFNDGLTLEELQRAKNKGIKFLKLYPKGMTTNAQNGTSDLLGEKTLEVLENAQKLGFILCVHAEQAGFCLDKEFLCHSVLETFALSFPKLKIIIEHLSDWRSIALIEKHDNLYATLTLHHISMTLDDLLGGSLDPHCFCKPLIKTKKDQERLLSLALKAHPKISFGSDSAPHFISKKHSANIPAGIFSAPILLPALCELFEKHNALENLQAFISDNAKKIYALDNLPSKKAHLSKKPFIVPTHTLCLNEKIAILRGGETLSWNLQEIA.

Zn(2+)-binding residues include H12 and H14. Substrate-binding positions include 14 to 16 and N40; that span reads HVR. Zn(2+)-binding residues include K94, H133, H167, and D239. At K94 the chain carries N6-carboxylysine. A substrate-binding site is contributed by H133. D239 is a catalytic residue. H243 and A255 together coordinate substrate.

Belongs to the metallo-dependent hydrolases superfamily. DHOase family. Class II DHOase subfamily. In terms of assembly, homodimer. It depends on Zn(2+) as a cofactor.

The catalysed reaction is (S)-dihydroorotate + H2O = N-carbamoyl-L-aspartate + H(+). It participates in pyrimidine metabolism; UMP biosynthesis via de novo pathway; (S)-dihydroorotate from bicarbonate: step 3/3. Its function is as follows. Catalyzes the reversible cyclization of carbamoyl aspartate to dihydroorotate. The protein is Dihydroorotase of Helicobacter pylori (strain J99 / ATCC 700824) (Campylobacter pylori J99).